A 207-amino-acid polypeptide reads, in one-letter code: Ras-related protein Rab7A (207 aa).

GTP-binding positions include 15–22 (GDSGVGKT), 63–67 (DTAGQ), and 125–128 (NKID). 2 S-geranylgeranyl cysteine lipidation sites follow: Cys205 and Cys207. The residue at position 207 (Cys207) is a Cysteine methyl ester.

Belongs to the small GTPase superfamily. Rab family.

The protein resides in the cell membrane. In terms of biological role, protein transport. Probably involved in vesicular traffic. This Mesembryanthemum crystallinum (Common ice plant) protein is Ras-related protein Rab7A.